Consider the following 285-residue polypeptide: Transmembrane protein DDB_G0269096 (285 aa).

Disordered stretches follow at residues 1-25 and 59-87; these read MEDR…MSQS and SFEN…NNKN. Composition is skewed to low complexity over residues 12-25 and 65-85; these read SDIS…MSQS and NNNN…NNNN. The next 5 membrane-spanning stretches (helical) occupy residues 124–144, 152–172, 182–202, 205–225, and 250–270; these read LEEI…LALI, AQMQ…FGVP, LIMG…ALVY, ANFE…MQFT, and FYFI…TALV.

It localises to the membrane. The polypeptide is Transmembrane protein DDB_G0269096 (Dictyostelium discoideum (Social amoeba)).